A 1051-amino-acid polypeptide reads, in one-letter code: Carbamoyl phosphate synthase large chain (1051 aa).

A carboxyphosphate synthetic domain region spans residues 1-399 (MKETPKKVLV…SLQKAVRMLD (399 aa)). 12 residues coordinate ATP: arginine 127, arginine 167, glycine 173, glycine 174, lysine 206, leucine 208, glutamate 213, glycine 239, valine 240, histidine 241, glutamine 282, and glutamate 296. The 195-residue stretch at 131–325 (RETMIENNLP…LAYVSAKLAL (195 aa)) folds into the ATP-grasp 1 domain. Residues glutamine 282, glutamate 296, and asparagine 298 each contribute to the Mg(2+) site. The Mn(2+) site is built by glutamine 282, glutamate 296, and asparagine 298. The interval 400-548 (IGEPGVVGGK…LTYNGTEDDL (149 aa)) is oligomerization domain. The tract at residues 549 to 930 (EFSQGNKLLI…LKSWLSSIPN (382 aa)) is carbamoyl phosphate synthetic domain. Residues 673–863 (SKLLDKLGIS…LINESMKAIF (191 aa)) form the ATP-grasp 2 domain. Residues arginine 709, lysine 748, isoleucine 750, glutamate 755, glycine 779, valine 780, histidine 781, serine 782, glutamine 822, and glutamate 834 each coordinate ATP. Mg(2+) is bound by residues glutamine 822, glutamate 834, and asparagine 836. Positions 822, 834, and 836 each coordinate Mn(2+). The MGS-like domain maps to 930–1051 (NRIPNKNGIA…FEISEYGGGI (122 aa)). The segment at 931 to 1051 (RIPNKNGIAL…FEISEYGGGI (121 aa)) is allosteric domain.

This sequence belongs to the CarB family. In terms of assembly, composed of two chains; the small (or glutamine) chain promotes the hydrolysis of glutamine to ammonia, which is used by the large (or ammonia) chain to synthesize carbamoyl phosphate. Tetramer of heterodimers (alpha,beta)4. Requires Mg(2+) as cofactor. Mn(2+) is required as a cofactor.

It carries out the reaction hydrogencarbonate + L-glutamine + 2 ATP + H2O = carbamoyl phosphate + L-glutamate + 2 ADP + phosphate + 2 H(+). The enzyme catalyses hydrogencarbonate + NH4(+) + 2 ATP = carbamoyl phosphate + 2 ADP + phosphate + 2 H(+). Its pathway is amino-acid biosynthesis; L-arginine biosynthesis; carbamoyl phosphate from bicarbonate: step 1/1. It participates in pyrimidine metabolism; UMP biosynthesis via de novo pathway; (S)-dihydroorotate from bicarbonate: step 1/3. Its function is as follows. Large subunit of the glutamine-dependent carbamoyl phosphate synthetase (CPSase). CPSase catalyzes the formation of carbamoyl phosphate from the ammonia moiety of glutamine, carbonate, and phosphate donated by ATP, constituting the first step of 2 biosynthetic pathways, one leading to arginine and/or urea and the other to pyrimidine nucleotides. The large subunit (synthetase) binds the substrates ammonia (free or transferred from glutamine from the small subunit), hydrogencarbonate and ATP and carries out an ATP-coupled ligase reaction, activating hydrogencarbonate by forming carboxy phosphate which reacts with ammonia to form carbamoyl phosphate. The sequence is that of Carbamoyl phosphate synthase large chain from Saccharolobus islandicus (strain M.16.27) (Sulfolobus islandicus).